The following is a 122-amino-acid chain: Large ribosomal subunit protein uL14 (122 aa).

This sequence belongs to the universal ribosomal protein uL14 family. In terms of assembly, part of the 50S ribosomal subunit. Forms a cluster with proteins L3 and L19. In the 70S ribosome, L14 and L19 interact and together make contacts with the 16S rRNA in bridges B5 and B8.

Its function is as follows. Binds to 23S rRNA. Forms part of two intersubunit bridges in the 70S ribosome. This chain is Large ribosomal subunit protein uL14, found in Alcanivorax borkumensis (strain ATCC 700651 / DSM 11573 / NCIMB 13689 / SK2).